A 61-amino-acid polypeptide reads, in one-letter code: Small ribosomal subunit protein uS14 (61 aa).

Positions 24, 27, 40, and 43 each coordinate Zn(2+).

Belongs to the universal ribosomal protein uS14 family. Zinc-binding uS14 subfamily. In terms of assembly, part of the 30S ribosomal subunit. Contacts proteins S3 and S10. Requires Zn(2+) as cofactor.

Its function is as follows. Binds 16S rRNA, required for the assembly of 30S particles and may also be responsible for determining the conformation of the 16S rRNA at the A site. The chain is Small ribosomal subunit protein uS14 from Staphylococcus aureus (strain USA300 / TCH1516).